The sequence spans 253 residues: Indole-3-glycerol phosphate synthase (253 aa).

It belongs to the TrpC family.

It catalyses the reaction 1-(2-carboxyphenylamino)-1-deoxy-D-ribulose 5-phosphate + H(+) = (1S,2R)-1-C-(indol-3-yl)glycerol 3-phosphate + CO2 + H2O. It functions in the pathway amino-acid biosynthesis; L-tryptophan biosynthesis; L-tryptophan from chorismate: step 4/5. This is Indole-3-glycerol phosphate synthase from Bacillus mycoides (strain KBAB4) (Bacillus weihenstephanensis).